The sequence spans 325 residues: Aldo-keto reductase family 1 member A1 (325 aa).

Residue alanine 2 is modified to N-acetylalanine. Serine 4 bears the Phosphoserine mark. Residues 11 to 20, threonine 21, and tryptophan 22 contribute to the NADP(+) site; that span reads GQKMPLIGLG. Serine 38 is modified (phosphoserine). Aspartate 45 is a binding site for NADP(+). Tyrosine 50 (proton donor) is an active-site residue. Lysine 127 carries the N6-acetyllysine; alternate modification. An N6-succinyllysine; alternate modification is found at lysine 127. Lysine 145 carries the N6-succinyllysine modification. The NADP(+) site is built by serine 162, asparagine 163, serine 211, leucine 213, serine 215, serine 216, lysine 263, serine 264, isoleucine 265, threonine 266, arginine 269, glutamine 272, and asparagine 273. A Phosphoserine modification is found at serine 211.

Belongs to the aldo/keto reductase family.

The protein resides in the cytoplasm. Its subcellular location is the cytosol. The protein localises to the apical cell membrane. It catalyses the reaction a primary alcohol + NADP(+) = an aldehyde + NADPH + H(+). The enzyme catalyses L-gulonate + NADP(+) = aldehydo-D-glucuronate + NADPH + H(+). The catalysed reaction is L-gulono-1,4-lactone + NADP(+) = D-glucurono-3,6-lactone + NADPH + H(+). It carries out the reaction allyl alcohol + NADP(+) = acrolein + NADPH + H(+). It catalyses the reaction glycerol + NADP(+) = D-glyceraldehyde + NADPH + H(+). The enzyme catalyses glycerol + NADP(+) = L-glyceraldehyde + NADPH + H(+). The catalysed reaction is hydroxyacetone + NADP(+) = methylglyoxal + NADPH + H(+). It carries out the reaction 3-deoxyfructose + NADP(+) = 3-deoxyglucosone + NADPH + H(+). It catalyses the reaction (R)-mevalonate + NADP(+) = (R)-mevaldate + NADPH + H(+). The enzyme catalyses pyridine 3-methanol + NADP(+) = pyridine-3-carbaldehyde + NADPH + H(+). The catalysed reaction is S-nitroso-CoA + NADPH + H(+) = sulfinamide-CoA + NADP(+). It carries out the reaction S-nitrosoglutathione + NADPH + H(+) = S-(hydroxysulfenamide)glutathione + NADP(+). Its function is as follows. Catalyzes the NADPH-dependent reduction of a wide variety of carbonyl-containing compounds to their corresponding alcohols. Displays enzymatic activity towards endogenous metabolites such as aromatic and aliphatic aldehydes, ketones, monosaccharides and bile acids, with a preference for negatively charged substrates, such as glucuronate and succinic semialdehyde. Functions as a detoxifiying enzyme by reducing a range of toxic aldehydes. Reduces methylglyoxal and 3-deoxyglucosone, which are present at elevated levels under hyperglycemic conditions and are cytotoxic. Involved also in the detoxification of lipid-derived aldehydes like acrolein. Plays a role in the activation of procarcinogens, such as polycyclic aromatic hydrocarbon trans-dihydrodiols, and in the metabolism of various xenobiotics and drugs. Also acts as an inhibitor of protein S-nitrosylation by mediating degradation of S-nitroso-coenzyme A (S-nitroso-CoA), a cofactor required to S-nitrosylate proteins. S-nitroso-CoA reductase activity is involved in reprogramming intermediary metabolism in renal proximal tubules, notably by inhibiting protein S-nitrosylation of isoform 2 of PKM (PKM2). Also acts as a S-nitroso-glutathione reductase by catalyzing the NADPH-dependent reduction of S-nitrosoglutathione. Displays no reductase activity towards retinoids. The chain is Aldo-keto reductase family 1 member A1 (AKR1A1) from Pongo abelii (Sumatran orangutan).